We begin with the raw amino-acid sequence, 577 residues long: Proline--tRNA ligase (577 aa).

It belongs to the class-II aminoacyl-tRNA synthetase family. ProS type 1 subfamily. In terms of assembly, homodimer.

It is found in the cytoplasm. It carries out the reaction tRNA(Pro) + L-proline + ATP = L-prolyl-tRNA(Pro) + AMP + diphosphate. Catalyzes the attachment of proline to tRNA(Pro) in a two-step reaction: proline is first activated by ATP to form Pro-AMP and then transferred to the acceptor end of tRNA(Pro). As ProRS can inadvertently accommodate and process non-cognate amino acids such as alanine and cysteine, to avoid such errors it has two additional distinct editing activities against alanine. One activity is designated as 'pretransfer' editing and involves the tRNA(Pro)-independent hydrolysis of activated Ala-AMP. The other activity is designated 'posttransfer' editing and involves deacylation of mischarged Ala-tRNA(Pro). The misacylated Cys-tRNA(Pro) is not edited by ProRS. The polypeptide is Proline--tRNA ligase (Thermotoga neapolitana (strain ATCC 49049 / DSM 4359 / NBRC 107923 / NS-E)).